The primary structure comprises 476 residues: Sulfate adenylyltransferase subunit 1 (476 aa).

Positions 24 to 240 (KSLLRFLTCG…LENVDIDRDK (217 aa)) constitute a tr-type G domain. Residues 33-40 (GSVDDGKS) are G1. Residue 33–40 (GSVDDGKS) coordinates GTP. The interval 91–95 (GITID) is G2. The tract at residues 112 to 115 (DTPG) is G3. GTP-binding positions include 112-116 (DTPGH) and 167-170 (NKMD). The interval 167-170 (NKMD) is G4. Residues 205 to 207 (SAL) are G5.

Belongs to the TRAFAC class translation factor GTPase superfamily. Classic translation factor GTPase family. CysN/NodQ subfamily. Heterodimer composed of CysD, the smaller subunit, and CysN.

The enzyme catalyses sulfate + ATP + H(+) = adenosine 5'-phosphosulfate + diphosphate. Its pathway is sulfur metabolism; hydrogen sulfide biosynthesis; sulfite from sulfate: step 1/3. Functionally, with CysD forms the ATP sulfurylase (ATPS) that catalyzes the adenylation of sulfate producing adenosine 5'-phosphosulfate (APS) and diphosphate, the first enzymatic step in sulfur assimilation pathway. APS synthesis involves the formation of a high-energy phosphoric-sulfuric acid anhydride bond driven by GTP hydrolysis by CysN coupled to ATP hydrolysis by CysD. The chain is Sulfate adenylyltransferase subunit 1 from Vibrio cholerae serotype O1 (strain ATCC 39541 / Classical Ogawa 395 / O395).